The chain runs to 471 residues: MKIKTRFAPSPTGYLHVGGARTALYSWLFARNHGGEFVLRIEDTDLERSTPEAIEAIMDGMNWLNLEWDEGPYFQTKRFDRYNAVIDDMIVAGTAYKCYCSKERLDALREEQMANGDKPRYDGRCRHSHEHHADDEPCVVRFANPQDGSVIFDDQIRGPIEFSNQELDDLIIRRTDGSPTYNFCVVVDDWDMEISHVIRGEDHINNTPRQINILKALNAPVPVYAHVSMINGDDGKKLSKRHGAVSVMQYRDDGYLPEALLNYLVRLGWSSGDQEIFSREEMIKLFSLGAVSKSASAFNTDKLLWLNHHYINTMQPEYVATYLQWHIEQANIDTRTGPELAELVKLLGERCKTLKEIAESCRYFYEEFDAFDADAAKKHLRPVARQPLEVVRDKLAAITAWTAENVHHAIQATADELEVGMGKVGMPLRVAVTGAGQSPGLDVTVHAIGKTRSVARINKALGFIAERESQQ.

The 'HIGH' region motif lies at 9–19 (PSPTGYLHVGG). Residues C98, C100, C125, and H127 each coordinate Zn(2+). The 'KMSKS' region motif lies at 237–241 (KLSKR). K240 contacts ATP.

The protein belongs to the class-I aminoacyl-tRNA synthetase family. Glutamate--tRNA ligase type 1 subfamily. As to quaternary structure, monomer. The cofactor is Zn(2+).

The protein resides in the cytoplasm. The enzyme catalyses tRNA(Glu) + L-glutamate + ATP = L-glutamyl-tRNA(Glu) + AMP + diphosphate. Functionally, catalyzes the attachment of glutamate to tRNA(Glu) in a two-step reaction: glutamate is first activated by ATP to form Glu-AMP and then transferred to the acceptor end of tRNA(Glu). This is Glutamate--tRNA ligase from Enterobacter sp. (strain 638).